Reading from the N-terminus, the 149-residue chain is Cytochrome c-type biogenesis protein CcmE (149 aa).

The Cytoplasmic segment spans residues 1–7 (MTRKQKR). Residues 8-28 (LAVIAGGMGFIATAVLLVLFA) form a helical; Signal-anchor for type II membrane protein membrane-spanning segment. The Periplasmic portion of the chain corresponds to 29–149 (FSQSVAYFYM…GVWKGEEASQ (121 aa)). Heme contacts are provided by H123 and Y127.

It belongs to the CcmE/CycJ family.

It is found in the cell inner membrane. Functionally, heme chaperone required for the biogenesis of c-type cytochromes. Transiently binds heme delivered by CcmC and transfers the heme to apo-cytochromes in a process facilitated by CcmF and CcmH. The chain is Cytochrome c-type biogenesis protein CcmE from Rhizobium rhizogenes (strain K84 / ATCC BAA-868) (Agrobacterium radiobacter).